The primary structure comprises 281 residues: Pantothenate synthetase (281 aa).

Position 31-38 (31-38 (MGNLHAGH)) interacts with ATP. His38 serves as the catalytic Proton donor. Gln62 is a binding site for (R)-pantoate. Gln62 is a beta-alanine binding site. Position 150–153 (150–153 (GKKD)) interacts with ATP. Gln156 lines the (R)-pantoate pocket. ATP-binding positions include Val179 and 187-190 (MSSR).

This sequence belongs to the pantothenate synthetase family. In terms of assembly, homodimer.

Its subcellular location is the cytoplasm. It catalyses the reaction (R)-pantoate + beta-alanine + ATP = (R)-pantothenate + AMP + diphosphate + H(+). It functions in the pathway cofactor biosynthesis; (R)-pantothenate biosynthesis; (R)-pantothenate from (R)-pantoate and beta-alanine: step 1/1. Its function is as follows. Catalyzes the condensation of pantoate with beta-alanine in an ATP-dependent reaction via a pantoyl-adenylate intermediate. This is Pantothenate synthetase from Xylella fastidiosa (strain M23).